Reading from the N-terminus, the 441-residue chain is Damage-control phosphatase ARMT1 (441 aa).

Residue Ala2 is modified to N-acetylalanine. Lys40 carries the post-translational modification N6-acetyllysine. Ser102 carries the phosphoserine modification. Residues Asp253 and Asn254 each coordinate Mn(2+). 253–254 lines the substrate pocket; that stretch reads DN. S-adenosyl-L-methionine is bound by residues Glu258 and Asp291. Residue Asp291 coordinates Mn(2+). Residues 367-371 and Lys404 contribute to the substrate site; that span reads DLNYR. Residues 401–404 carry the Subfamily III RTxK motif motif; the sequence is RTLK.

The protein belongs to the damage-control phosphatase family. Sugar phosphate phosphatase III subfamily. Mn(2+) serves as cofactor. The cofactor is Ni(2+). Automethylated.

The catalysed reaction is beta-D-fructose 1-phosphate + H2O = D-fructose + phosphate. It catalyses the reaction beta-D-fructose 6-phosphate = dihydroxyacetone + D-glyceraldehyde 3-phosphate. The enzyme catalyses L-glutamyl-[protein] + S-adenosyl-L-methionine = [protein]-L-glutamate 5-O-methyl ester + S-adenosyl-L-homocysteine. Its function is as follows. Metal-dependent phosphatase that shows phosphatase activity against several substrates, including fructose-1-phosphate and fructose-6-phosphate. Its preference for fructose-1-phosphate, a strong glycating agent that causes DNA damage rather than a canonical yeast metabolite, suggests a damage-control function in hexose phosphate metabolism. Has also been shown to have O-methyltransferase activity that methylates glutamate residues of target proteins to form gamma-glutamyl methyl ester residues. Possibly methylates PCNA, suggesting it is involved in the DNA damage response. The polypeptide is Damage-control phosphatase ARMT1 (Macaca fascicularis (Crab-eating macaque)).